We begin with the raw amino-acid sequence, 1342 residues long: Receptor tyrosine-protein kinase erbB-3 (1342 aa).

The first 19 residues, 1–19, serve as a signal peptide directing secretion; that stretch reads MRANDALQVLGLLFSLARG. Over 20-643 the chain is Extracellular; the sequence is SEVGNSQAVC…LVLIGKTHLT (624 aa). Cysteine 29 and cysteine 56 are disulfide-bonded. Asparagine 126 carries N-linked (GlcNAc...) asparagine glycosylation. 12 disulfides stabilise this stretch: cysteine 156-cysteine 183, cysteine 186-cysteine 194, cysteine 190-cysteine 202, cysteine 210-cysteine 218, cysteine 214-cysteine 226, cysteine 227-cysteine 235, cysteine 231-cysteine 243, cysteine 246-cysteine 255, cysteine 259-cysteine 286, cysteine 290-cysteine 301, cysteine 305-cysteine 320, and cysteine 323-cysteine 327. Asparagine 250 is a glycosylation site (N-linked (GlcNAc...) asparagine). 5 N-linked (GlcNAc...) asparagine glycosylation sites follow: asparagine 353, asparagine 408, asparagine 414, asparagine 437, and asparagine 469. 10 disulfide bridges follow: cysteine 500/cysteine 509, cysteine 504/cysteine 517, cysteine 520/cysteine 529, cysteine 533/cysteine 549, cysteine 552/cysteine 565, cysteine 556/cysteine 573, cysteine 576/cysteine 585, cysteine 589/cysteine 610, cysteine 613/cysteine 621, and cysteine 617/cysteine 629. Asparagine 522 carries an N-linked (GlcNAc...) asparagine glycan. Asparagine 566 carries N-linked (GlcNAc...) asparagine glycosylation. An N-linked (GlcNAc...) asparagine glycan is attached at asparagine 616. The chain crosses the membrane as a helical span at residues 644-664; sequence MALTVIAGLVVIFMMLGGTFL. The Cytoplasmic portion of the chain corresponds to 665-1342; it reads YWRGRRIQNK…LFPKANAQRT (678 aa). Serine 686 carries the post-translational modification Phosphoserine. In terms of domain architecture, Protein kinase spans 709–966; that stretch reads LRKLKVLGSG…TFKELANEFT (258 aa). ATP is bound by residues 715–723, lysine 742, 788–790, and 834–839; these read LGSGVFGTV, QYL, and NLAARN. Asparagine 834 functions as the Proton acceptor in the catalytic mechanism. 2 disordered regions span residues 980 to 999 and 1033 to 1152; these read RESGPGIAPGPEPHGLTNKK and LPVG…PGLE. Serine 982 is subject to Phosphoserine. Polar residues predominate over residues 1042 to 1075; the sequence is RGSQSLLSPSSGYMPMNQGNLGESCQESAVSGSS.

The protein belongs to the protein kinase superfamily. Tyr protein kinase family. EGF receptor subfamily. As to quaternary structure, monomer and homodimer. Heterodimer with each of the other ERBB receptors (Potential). Interacts with CSPG5. Interacts with GRB7. Interacts with MUC1. Interacts with MYOC. Interacts with isoform 2 of PA2G4. Found in a ternary complex with NRG1 and ITGAV:ITGB3 or ITGA6:ITGB4. Autophosphorylated. Ligand-binding increases phosphorylation on tyrosine residues and promotes its association with the p85 subunit of phosphatidylinositol 3-kinase. As to expression, epithelial tissues and brain.

It localises to the cell membrane. Its subcellular location is the secreted. It catalyses the reaction L-tyrosyl-[protein] + ATP = O-phospho-L-tyrosyl-[protein] + ADP + H(+). Functionally, tyrosine-protein kinase that plays an essential role as cell surface receptor for neuregulins. Binds to neuregulin-1 (NRG1) and is activated by it; ligand-binding increases phosphorylation on tyrosine residues and promotes its association with the p85 subunit of phosphatidylinositol 3-kinase. May also be activated by CSPG5. Involved in the regulation of myeloid cell differentiation. This chain is Receptor tyrosine-protein kinase erbB-3 (ERBB3), found in Homo sapiens (Human).